The chain runs to 227 residues: UPF0758 protein CPF_2399 (227 aa).

The region spanning 105–227 (KISKPSDVAK…FISLKEKDIL (123 aa)) is the MPN domain. Residues His176, His178, and Asp189 each coordinate Zn(2+). The short motif at 176-189 (HNHPSGDPTPSRDD) is the JAMM motif element.

The protein belongs to the UPF0758 family.

The protein is UPF0758 protein CPF_2399 of Clostridium perfringens (strain ATCC 13124 / DSM 756 / JCM 1290 / NCIMB 6125 / NCTC 8237 / Type A).